A 185-amino-acid chain; its full sequence is Peptidyl-tRNA hydrolase (185 aa).

Tyr15 is a tRNA binding site. The active-site Proton acceptor is the His20. 3 residues coordinate tRNA: Tyr64, Asn66, and Asn112.

It belongs to the PTH family. In terms of assembly, monomer.

It localises to the cytoplasm. The enzyme catalyses an N-acyl-L-alpha-aminoacyl-tRNA + H2O = an N-acyl-L-amino acid + a tRNA + H(+). Its function is as follows. Hydrolyzes ribosome-free peptidyl-tRNAs (with 1 or more amino acids incorporated), which drop off the ribosome during protein synthesis, or as a result of ribosome stalling. In terms of biological role, catalyzes the release of premature peptidyl moieties from peptidyl-tRNA molecules trapped in stalled 50S ribosomal subunits, and thus maintains levels of free tRNAs and 50S ribosomes. This chain is Peptidyl-tRNA hydrolase, found in Porphyromonas gingivalis (strain ATCC BAA-308 / W83).